A 360-amino-acid polypeptide reads, in one-letter code: Protein YIM1-1 (360 aa).

Belongs to the YIM1 family.

It localises to the lipid droplet. Its subcellular location is the mitochondrion. The chain is Protein YIM1-1 (YIM1-1) from Lachancea thermotolerans (strain ATCC 56472 / CBS 6340 / NRRL Y-8284) (Yeast).